Consider the following 437-residue polypeptide: Ribosomal protein uS12 methylthiotransferase RimO (437 aa).

The 112-residue stretch at 5 to 116 (PTISVSHLGC…IAEVIQRVET (112 aa)) folds into the MTTase N-terminal domain. 6 residues coordinate [4Fe-4S] cluster: Cys14, Cys50, Cys79, Cys154, Cys158, and Cys161. Residues 140–369 (TTNEAVAYLR…MEIQQPIAAK (230 aa)) form the Radical SAM core domain. A TRAM domain is found at 372-437 (QKCVGQTVEV…DVYDLYGKVI (66 aa)).

This sequence belongs to the methylthiotransferase family. RimO subfamily. [4Fe-4S] cluster serves as cofactor.

The protein localises to the cytoplasm. It carries out the reaction L-aspartate(89)-[ribosomal protein uS12]-hydrogen + (sulfur carrier)-SH + AH2 + 2 S-adenosyl-L-methionine = 3-methylsulfanyl-L-aspartate(89)-[ribosomal protein uS12]-hydrogen + (sulfur carrier)-H + 5'-deoxyadenosine + L-methionine + A + S-adenosyl-L-homocysteine + 2 H(+). Functionally, catalyzes the methylthiolation of an aspartic acid residue of ribosomal protein uS12. The sequence is that of Ribosomal protein uS12 methylthiotransferase RimO from Crocosphaera subtropica (strain ATCC 51142 / BH68) (Cyanothece sp. (strain ATCC 51142)).